A 1104-amino-acid chain; its full sequence is Carbamoyl phosphate synthase large chain (1104 aa).

The interval 1 to 402 is carboxyphosphate synthetic domain; that stretch reads MPRRTDLKSV…ALQKALRSTE (402 aa). ATP is bound by residues R129, R169, G175, G176, E208, I210, E215, G241, V242, H243, Q285, and E299. Positions 133-328 constitute an ATP-grasp 1 domain; it reads KGVVERCGAE…IAKIAARLAV (196 aa). Residues Q285, E299, and N301 each contribute to the Mg(2+) site. Mn(2+)-binding residues include Q285, E299, and N301. The segment at 403–547 is oligomerization domain; the sequence is KRGATFSWAG…YSSYDEEDET (145 aa). The tract at residues 548 to 948 is carbamoyl phosphate synthetic domain; that stretch reads RPREKAAIVI…AFGKSQTAAY (401 aa). An ATP-grasp 2 domain is found at 676-867; that stretch reads GQVLERAGLV…LAKAAARLMA (192 aa). The ATP site is built by R712, R751, L753, E758, G783, I784, H785, S786, Q826, and E838. 3 residues coordinate Mg(2+): Q826, E838, and N840. Mn(2+) contacts are provided by Q826, E838, and N840. The 151-residue stretch at 949-1099 folds into the MGS-like domain; the sequence is GGLPTAGTAF…QEHTARLNAA (151 aa). The interval 949–1104 is allosteric domain; that stretch reads GGLPTAGTAF…RLNAAWEGRA (156 aa).

Belongs to the CarB family. Composed of two chains; the small (or glutamine) chain promotes the hydrolysis of glutamine to ammonia, which is used by the large (or ammonia) chain to synthesize carbamoyl phosphate. Tetramer of heterodimers (alpha,beta)4. It depends on Mg(2+) as a cofactor. Mn(2+) serves as cofactor.

It carries out the reaction hydrogencarbonate + L-glutamine + 2 ATP + H2O = carbamoyl phosphate + L-glutamate + 2 ADP + phosphate + 2 H(+). The catalysed reaction is hydrogencarbonate + NH4(+) + 2 ATP = carbamoyl phosphate + 2 ADP + phosphate + 2 H(+). Its pathway is amino-acid biosynthesis; L-arginine biosynthesis; carbamoyl phosphate from bicarbonate: step 1/1. It functions in the pathway pyrimidine metabolism; UMP biosynthesis via de novo pathway; (S)-dihydroorotate from bicarbonate: step 1/3. Its function is as follows. Large subunit of the glutamine-dependent carbamoyl phosphate synthetase (CPSase). CPSase catalyzes the formation of carbamoyl phosphate from the ammonia moiety of glutamine, carbonate, and phosphate donated by ATP, constituting the first step of 2 biosynthetic pathways, one leading to arginine and/or urea and the other to pyrimidine nucleotides. The large subunit (synthetase) binds the substrates ammonia (free or transferred from glutamine from the small subunit), hydrogencarbonate and ATP and carries out an ATP-coupled ligase reaction, activating hydrogencarbonate by forming carboxy phosphate which reacts with ammonia to form carbamoyl phosphate. This Kineococcus radiotolerans (strain ATCC BAA-149 / DSM 14245 / SRS30216) protein is Carbamoyl phosphate synthase large chain.